A 503-amino-acid chain; its full sequence is Putative acyl--CoA ligase YdaB (503 aa).

The protein belongs to the ATP-dependent AMP-binding enzyme family.

The protein is Putative acyl--CoA ligase YdaB (ydaB) of Bacillus subtilis (strain 168).